The following is a 78-amino-acid chain: Large ribosomal subunit protein bL28 (78 aa).

Residues Met1–Ser21 form a disordered region.

The protein belongs to the bacterial ribosomal protein bL28 family.

The chain is Large ribosomal subunit protein bL28 from Synechococcus sp. (strain RCC307).